The sequence spans 472 residues: Glycosyl hydrolase family 109 protein (472 aa).

The tat-type signal signal peptide spans 1–35; it reads MSQTPAVSRRLLLGSAAATGALATGIGSAAPVAAA. Residues 68-69, Asp90, 139-142, His145, 159-160, and Asn188 each bind NAD(+); these read NR, WEFH, and EL. Residues Tyr217, Arg236, 248-251, and Tyr330 contribute to the substrate site; that span reads YPMH. An NAD(+)-binding site is contributed by Tyr248.

Belongs to the Gfo/Idh/MocA family. Glycosyl hydrolase 109 subfamily. It depends on NAD(+) as a cofactor. Post-translationally, predicted to be exported by the Tat system. The position of the signal peptide cleavage has not been experimentally proven.

In terms of biological role, glycosidase. Has no alpha-N-acetylgalactosaminidase activity. This chain is Glycosyl hydrolase family 109 protein, found in Streptomyces coelicolor (strain ATCC BAA-471 / A3(2) / M145).